The following is a 195-amino-acid chain: Peptide methionine sulfoxide reductase MsrA 2 (195 aa).

Cys-18 is an active-site residue.

It belongs to the MsrA Met sulfoxide reductase family.

The catalysed reaction is L-methionyl-[protein] + [thioredoxin]-disulfide + H2O = L-methionyl-(S)-S-oxide-[protein] + [thioredoxin]-dithiol. It carries out the reaction [thioredoxin]-disulfide + L-methionine + H2O = L-methionine (S)-S-oxide + [thioredoxin]-dithiol. Its function is as follows. Has an important function as a repair enzyme for proteins that have been inactivated by oxidation. Catalyzes the reversible oxidation-reduction of methionine sulfoxide in proteins to methionine. In Mesorhizobium japonicum (strain LMG 29417 / CECT 9101 / MAFF 303099) (Mesorhizobium loti (strain MAFF 303099)), this protein is Peptide methionine sulfoxide reductase MsrA 2 (msrA2).